The primary structure comprises 369 residues: Phospho-N-acetylmuramoyl-pentapeptide-transferase (369 aa).

A run of 10 helical transmembrane segments spans residues 30–50 (LAIF…IRWM), 74–94 (GTPT…TLLW), 97–117 (LSNP…LLGF), 136–156 (IRLA…IVFA), 177–197 (YFVD…VGAA), 208–228 (GLAT…AYLV), 244–264 (GVGE…GFLW), 272–292 (IFMG…VAVA), 297–317 (IVLA…IIQV), and 346–366 (TVVI…LATL).

This sequence belongs to the glycosyltransferase 4 family. MraY subfamily. Mg(2+) is required as a cofactor.

The protein localises to the cell inner membrane. It catalyses the reaction UDP-N-acetyl-alpha-D-muramoyl-L-alanyl-gamma-D-glutamyl-meso-2,6-diaminopimeloyl-D-alanyl-D-alanine + di-trans,octa-cis-undecaprenyl phosphate = di-trans,octa-cis-undecaprenyl diphospho-N-acetyl-alpha-D-muramoyl-L-alanyl-D-glutamyl-meso-2,6-diaminopimeloyl-D-alanyl-D-alanine + UMP. It participates in cell wall biogenesis; peptidoglycan biosynthesis. Catalyzes the initial step of the lipid cycle reactions in the biosynthesis of the cell wall peptidoglycan: transfers peptidoglycan precursor phospho-MurNAc-pentapeptide from UDP-MurNAc-pentapeptide onto the lipid carrier undecaprenyl phosphate, yielding undecaprenyl-pyrophosphoryl-MurNAc-pentapeptide, known as lipid I. The sequence is that of Phospho-N-acetylmuramoyl-pentapeptide-transferase from Phenylobacterium zucineum (strain HLK1).